We begin with the raw amino-acid sequence, 440 residues long: L-gulonolactone oxidase (440 aa).

One can recognise an FAD-binding PCMH-type domain in the interval 17–187 (YGCSPEMYYQ…LTVTLQCVPQ (171 aa)). Position 54 is a pros-8alpha-FAD histidine (H54). Residues 251 to 273 (IGFYLLEFLLWTSTYLPRLVGWI) form a helical membrane-spanning segment.

Belongs to the oxygen-dependent FAD-linked oxidoreductase family. FAD is required as a cofactor. Highly expressed in liver.

The protein localises to the microsome membrane. The protein resides in the endoplasmic reticulum membrane. It carries out the reaction L-gulono-1,4-lactone + O2 = L-ascorbate + H2O2 + H(+). It participates in cofactor biosynthesis; L-ascorbate biosynthesis via UDP-alpha-D-glucuronate pathway; L-ascorbate from UDP-alpha-D-glucuronate: step 4/4. In terms of biological role, oxidizes L-gulono-1,4-lactone to hydrogen peroxide and L-xylo-hexulonolactone which spontaneously isomerizes to L-ascorbate. This Mus musculus (Mouse) protein is L-gulonolactone oxidase (Gulo).